The chain runs to 203 residues: Large ribosomal subunit protein uL18 (203 aa).

It belongs to the universal ribosomal protein uL18 family. As to quaternary structure, part of the 50S ribosomal subunit. Contacts the 5S and 23S rRNAs.

Functionally, this is one of the proteins that bind and probably mediate the attachment of the 5S RNA into the large ribosomal subunit, where it forms part of the central protuberance. This chain is Large ribosomal subunit protein uL18, found in Pyrococcus furiosus (strain ATCC 43587 / DSM 3638 / JCM 8422 / Vc1).